The chain runs to 362 residues: Peptide chain release factor 1 (362 aa).

An N5-methylglutamine modification is found at Gln-237.

It belongs to the prokaryotic/mitochondrial release factor family. Methylated by PrmC. Methylation increases the termination efficiency of RF1.

It is found in the cytoplasm. Peptide chain release factor 1 directs the termination of translation in response to the peptide chain termination codons UAG and UAA. In Aeromonas salmonicida (strain A449), this protein is Peptide chain release factor 1.